The sequence spans 182 residues: UPF0397 protein BCG9842_B2659 (182 aa).

A run of 5 helical transmembrane segments spans residues 9-29, 40-60, 71-91, 114-134, and 142-162; these read VVAIGIGAALYGILGLWGFSI, AILTVFGALFGPVAGLLIGLI, WGIWWGWVISSGIIGFSMGLI, ITGLVGIVIAIIFAGAFDIIV, and IVIQVLGATISDVIVFLVLGL.

This sequence belongs to the UPF0397 family.

It localises to the cell membrane. The sequence is that of UPF0397 protein BCG9842_B2659 from Bacillus cereus (strain G9842).